We begin with the raw amino-acid sequence, 454 residues long: Sensor histidine kinase YkoH (454 aa).

The Cytoplasmic segment spans residues 1–12 (MKLKTKIHLYTS). A helical transmembrane segment spans residues 13–33 (ISLLILLILVHTAVYLIFSSA). At 34-153 (LTSKDAARLA…NTEESLFLLK (120 aa)) the chain is on the extracellular side. A helical membrane pass occupies residues 154-174 (IILIAASAAVCIASFFAGSLL). Residues 175–454 (ARRIINPIRR…QFSEQNGGGR (280 aa)) are Cytoplasmic-facing. An HAMP domain is found at 176-230 (RRIINPIRRLMITMKDIQRDKEFKTISLEGQSNDELYQMGLTFNEMAMMLKEHYD). Residues 238 to 450 (DASHELKTPL…AVTMQFSEQN (213 aa)) form the Histidine kinase domain. His241 is modified (phosphohistidine; by autocatalysis).

It is found in the cell membrane. It carries out the reaction ATP + protein L-histidine = ADP + protein N-phospho-L-histidine.. In terms of biological role, probable member of the two-component regulatory system YkoH/YkoG. Potentially phosphorylates YkoG. In Bacillus subtilis (strain 168), this protein is Sensor histidine kinase YkoH (ykoH).